A 179-amino-acid polypeptide reads, in one-letter code: Photosystem I assembly protein Ycf3 (179 aa).

TPR repeat units follow at residues 29–62, 66–99, and 126–159; these read AFSYYRAGMSAQSEGKYAEALENYYEALQLEEDP, SYTLYNIGLIYGNNGNYSQALEYYHQALELNSNL, and NLEIRNDEYLELAKEFFDKAAEYWRQALKLAPDN.

This sequence belongs to the Ycf3 family.

The protein localises to the plastid. It is found in the chloroplast thylakoid membrane. Its function is as follows. Essential for the assembly of the photosystem I (PSI) complex. May act as a chaperone-like factor to guide the assembly of the PSI subunits. The sequence is that of Photosystem I assembly protein Ycf3 from Trieres chinensis (Marine centric diatom).